A 90-amino-acid chain; its full sequence is Protein PRAC2 (90 aa).

Highly expressed in prostate and testis. Also detected in placenta, muscle, colon, peripheral blood leukocytes and skin.

It is found in the nucleus. The polypeptide is Protein PRAC2 (Homo sapiens (Human)).